A 360-amino-acid polypeptide reads, in one-letter code: 3-dehydroquinate synthase (360 aa).

NAD(+)-binding positions include 71–76 (DGEQYK), 105–109 (GVIGD), 129–130 (TT), Lys142, Lys151, and 169–172 (CLDT). Residues Glu184, His247, and His264 each coordinate Zn(2+).

The protein belongs to the sugar phosphate cyclases superfamily. Dehydroquinate synthase family. Co(2+) serves as cofactor. The cofactor is Zn(2+). NAD(+) is required as a cofactor.

It localises to the cytoplasm. It carries out the reaction 7-phospho-2-dehydro-3-deoxy-D-arabino-heptonate = 3-dehydroquinate + phosphate. The protein operates within metabolic intermediate biosynthesis; chorismate biosynthesis; chorismate from D-erythrose 4-phosphate and phosphoenolpyruvate: step 2/7. In terms of biological role, catalyzes the conversion of 3-deoxy-D-arabino-heptulosonate 7-phosphate (DAHP) to dehydroquinate (DHQ). The sequence is that of 3-dehydroquinate synthase from Erwinia tasmaniensis (strain DSM 17950 / CFBP 7177 / CIP 109463 / NCPPB 4357 / Et1/99).